A 117-amino-acid polypeptide reads, in one-letter code: uncharacterized protein (117 aa).

Its subcellular location is the plastid. The protein localises to the chloroplast. This is an uncharacterized protein from Chlamydomonas reinhardtii (Chlamydomonas smithii).